A 298-amino-acid chain; its full sequence is Lipoyl synthase (298 aa).

[4Fe-4S] cluster-binding residues include C40, C45, C51, C67, C71, C74, and S280. A Radical SAM core domain is found at 53 to 269 (AVRKTATFMI…KEIALSKGFS (217 aa)).

It belongs to the radical SAM superfamily. Lipoyl synthase family. Requires [4Fe-4S] cluster as cofactor.

The protein resides in the cytoplasm. It catalyses the reaction [[Fe-S] cluster scaffold protein carrying a second [4Fe-4S](2+) cluster] + N(6)-octanoyl-L-lysyl-[protein] + 2 oxidized [2Fe-2S]-[ferredoxin] + 2 S-adenosyl-L-methionine + 4 H(+) = [[Fe-S] cluster scaffold protein] + N(6)-[(R)-dihydrolipoyl]-L-lysyl-[protein] + 4 Fe(3+) + 2 hydrogen sulfide + 2 5'-deoxyadenosine + 2 L-methionine + 2 reduced [2Fe-2S]-[ferredoxin]. It participates in protein modification; protein lipoylation via endogenous pathway; protein N(6)-(lipoyl)lysine from octanoyl-[acyl-carrier-protein]. In terms of biological role, catalyzes the radical-mediated insertion of two sulfur atoms into the C-6 and C-8 positions of the octanoyl moiety bound to the lipoyl domains of lipoate-dependent enzymes, thereby converting the octanoylated domains into lipoylated derivatives. This is Lipoyl synthase from Bacillus mycoides (strain KBAB4) (Bacillus weihenstephanensis).